The chain runs to 897 residues: Interleukin enhancer-binding factor 3-A (897 aa).

Positions 5–379 (RIFLNDDRHV…PLKRPIEEDG (375 aa)) constitute a DZF domain. Disordered regions lie at residues 52 to 85 (QEKD…GENP), 364 to 403 (TTYA…PPQV), and 466 to 502 (MGLP…EVDS). Composition is skewed to basic and acidic residues over residues 72–81 (EEGKDSEMKT) and 373–384 (RPIEEDGDDKSP). The Bipartite nuclear localization signal motif lies at 372 to 390 (KRPIEEDGDDKSPSKKKKK). DRBM domains are found at residues 399-468 (EPPQ…DMGL) and 521-587 (HGKN…KLFP). 2 disordered regions span residues 627 to 650 (PPPQ…GRGG) and 708 to 797 (GDSY…AQGA). Over residues 637-650 (RGGMNRGRGRGRGG) the composition is skewed to gly residues. The span at 714–747 (PTPPKPFVNKKPPPPQQQQQQQPPPQHASNPPKP) shows a compositional bias: pro residues. Positions 749–794 (YNQGYQGHQGGQQQQQQQQQQQTYNQNQYSNYGPPQKQKGGYNQGA) are enriched in low complexity.

A component of a ybx2/frgy2-containing mRNA-ribonucleoprotein (mRNP) complex. Also a component of the CCAAT box transcription factor (CBTF) complex. In terms of processing, phosphorylated. Phosphorylation affects nuclear translocation. Post-translationally, methylated by protein arginine N-methyltransferase 1 (prmt1b) in the RGG-rich domain. Methylation decreases DNA-binding and thereby decreases transcription of the gata2 gene, but does not regulate dsRNA binding or subcellular localization. Expressed mainly in the ectoderm (at protein level).

It localises to the nucleus. It is found in the cytoplasm. Functionally, RNA-binding protein that plays an essential role in the biogenesis of circular RNAs (circRNAs) which are produced by back-splicing circularization of pre-mRNAs. Within the nucleus, promotes circRNAs processing by stabilizing the regulatory elements residing in the flanking introns of the circularized exons. Plays thereby a role in the back-splicing of a subset of circRNAs. As a consequence, participates in a wide range of transcriptional and post-transcriptional processes. Binds to poly-U elements and AU-rich elements (AREs) in the 3'-UTR of target mRNAs. Upon viral infection, ILF3 accumulates in the cytoplasm and participates in the innate antiviral response. Mechanistically, ILF3 becomes phosphorylated and activated by the double-stranded RNA-activated protein kinase/PKR which releases ILF3 from cellular mature circRNAs. In turn, unbound ILF3 molecules are able to interact with and thus inhibit viral mRNAs. Has a cytoplasmic role early in development as part of a ribonucleoprotein (mRNP) complex which may regulate mRNA transport and/or translation. Following nuclear localization at the mid-blastula transition, acts as a transcription factor and binds the 5'-CCAAT-3' promoter sequence to regulate transcription of the gata2 gene as a subunit of the CCAAT box transcription factor (CBTF). Its role as an mRNP component negatively regulates its activity as a transcription factor by precluding its nuclear localization. In Xenopus laevis (African clawed frog), this protein is Interleukin enhancer-binding factor 3-A (ilf3-a).